The sequence spans 157 residues: Crossover junction endodeoxyribonuclease RuvC (157 aa).

Residues Asp7, Glu70, and Asp142 contribute to the active site. 3 residues coordinate Mg(2+): Asp7, Glu70, and Asp142.

Belongs to the RuvC family. In terms of assembly, homodimer which binds Holliday junction (HJ) DNA. The HJ becomes 2-fold symmetrical on binding to RuvC with unstacked arms; it has a different conformation from HJ DNA in complex with RuvA. In the full resolvosome a probable DNA-RuvA(4)-RuvB(12)-RuvC(2) complex forms which resolves the HJ. Requires Mg(2+) as cofactor.

It is found in the cytoplasm. The catalysed reaction is Endonucleolytic cleavage at a junction such as a reciprocal single-stranded crossover between two homologous DNA duplexes (Holliday junction).. In terms of biological role, the RuvA-RuvB-RuvC complex processes Holliday junction (HJ) DNA during genetic recombination and DNA repair. Endonuclease that resolves HJ intermediates. Cleaves cruciform DNA by making single-stranded nicks across the HJ at symmetrical positions within the homologous arms, yielding a 5'-phosphate and a 3'-hydroxyl group; requires a central core of homology in the junction. The consensus cleavage sequence is 5'-(A/T)TT(C/G)-3'. Cleavage occurs on the 3'-side of the TT dinucleotide at the point of strand exchange. HJ branch migration catalyzed by RuvA-RuvB allows RuvC to scan DNA until it finds its consensus sequence, where it cleaves and resolves the cruciform DNA. The polypeptide is Crossover junction endodeoxyribonuclease RuvC (Synechococcus sp. (strain RCC307)).